The chain runs to 312 residues: Ribosomal RNA small subunit methyltransferase H (312 aa).

S-adenosyl-L-methionine is bound by residues 33–35 (GGH), D52, F81, D102, and Q109.

Belongs to the methyltransferase superfamily. RsmH family.

The protein resides in the cytoplasm. It catalyses the reaction cytidine(1402) in 16S rRNA + S-adenosyl-L-methionine = N(4)-methylcytidine(1402) in 16S rRNA + S-adenosyl-L-homocysteine + H(+). In terms of biological role, specifically methylates the N4 position of cytidine in position 1402 (C1402) of 16S rRNA. In Leuconostoc mesenteroides subsp. mesenteroides (strain ATCC 8293 / DSM 20343 / BCRC 11652 / CCM 1803 / JCM 6124 / NCDO 523 / NBRC 100496 / NCIMB 8023 / NCTC 12954 / NRRL B-1118 / 37Y), this protein is Ribosomal RNA small subunit methyltransferase H.